Reading from the N-terminus, the 815-residue chain is Lon protease 1 (815 aa).

Residues 19 to 212 (MPLLPLRDIV…KLFGQIRSEI (194 aa)) enclose the Lon N-terminal domain. 364–371 (GPPGVGKT) contributes to the ATP binding site. Residues 601–782 (KDEIGLAVGL…DDVLRKAMVV (182 aa)) enclose the Lon proteolytic domain. Active-site residues include Ser-688 and Lys-731. A disordered region spans residues 793 to 815 (EAGAQQAVMFEQKPPAADEIRAH).

The protein belongs to the peptidase S16 family. Homohexamer. Organized in a ring with a central cavity.

It localises to the cytoplasm. The enzyme catalyses Hydrolysis of proteins in presence of ATP.. In terms of biological role, ATP-dependent serine protease that mediates the selective degradation of mutant and abnormal proteins as well as certain short-lived regulatory proteins. Required for cellular homeostasis and for survival from DNA damage and developmental changes induced by stress. Degrades polypeptides processively to yield small peptide fragments that are 5 to 10 amino acids long. Binds to DNA in a double-stranded, site-specific manner. This chain is Lon protease 1, found in Syntrophobacter fumaroxidans (strain DSM 10017 / MPOB).